We begin with the raw amino-acid sequence, 347 residues long: MSVMFDPDTAIYPFPPKPTPLSIDEKAYYREKIKRLLKERNAVMVAHYYTDPEIQQLAEETGGCISDSLEMARFGAKHPASTLLVAGVRFMGETAKILSPEKTILMPTLQAECSLDLGCPVEEFNAFCDAHPDRTVVVYANTSAAVKARADWVVTSSIAVELIDHLDSLGEKIIWAPDKHLGRYVQKQTGGDILCWQGACIVHDEFKTQALTRLQEEYPDAAILVHPESPQAIVDMADAVGSTSQLIAAAKTLPHQRLIVATDRGIFYKMQQAVPDKELLEAPTAGEGATCRSCAHCPWMAMNGLQAIAEALEQEGSNHEVHVDERLRERALVPLNRMLDFAATLRG.

Histidine 47 and serine 68 together coordinate iminosuccinate. A [4Fe-4S] cluster-binding site is contributed by cysteine 113. Iminosuccinate-binding positions include 139 to 141 (YAN) and serine 156. Cysteine 200 is a binding site for [4Fe-4S] cluster. Iminosuccinate contacts are provided by residues 226–228 (HPE) and threonine 243. Cysteine 297 is a [4Fe-4S] cluster binding site.

It belongs to the quinolinate synthase family. Type 1 subfamily. It depends on [4Fe-4S] cluster as a cofactor.

Its subcellular location is the cytoplasm. The catalysed reaction is iminosuccinate + dihydroxyacetone phosphate = quinolinate + phosphate + 2 H2O + H(+). It functions in the pathway cofactor biosynthesis; NAD(+) biosynthesis; quinolinate from iminoaspartate: step 1/1. In terms of biological role, catalyzes the condensation of iminoaspartate with dihydroxyacetone phosphate to form quinolinate. The protein is Quinolinate synthase of Escherichia coli (strain K12 / MC4100 / BW2952).